The primary structure comprises 694 residues: Frizzled-8 (694 aa).

A signal peptide spans 1-27 (MEWGYLLEVTSLLAALALLQRSSGAAA). Residues 28-275 (ASAKELACQE…NPFFSQDERA (248 aa)) are Extracellular-facing. An FZ domain is found at 30–151 (AKELACQEIT…GNPDTLCMDY (122 aa)). Cystine bridges form between Cys-35/Cys-96, Cys-43/Cys-89, Cys-80/Cys-118, Cys-107/Cys-148, and Cys-111/Cys-135. A glycan (N-linked (GlcNAc...) asparagine) is linked at Asn-49. 71–78 (QFWPLVEI) is a binding site for hexadecanoate. The segment at 95 to 100 (ICLEDY) is wnt-binding. Residues 147–152 (LCMDYN) are wnt-binding. An N-linked (GlcNAc...) asparagine glycan is attached at Asn-152. The disordered stretch occupies residues 155 to 226 (DLTTAAPSPP…KARPPGGGAA (72 aa)). Over residues 161-175 (PSPPRRLPPPPPGEQ) the composition is skewed to pro residues. A compositionally biased stretch (low complexity) spans 176-186 (PPSGSGHGRPP). A compositionally biased stretch (gly residues) spans 210-225 (RGGGGGGKARPPGGGA). Residues 276 to 296 (FTVFWIGLWSVLCFVSTFATV) traverse the membrane as a helical segment. The Cytoplasmic portion of the chain corresponds to 297–312 (STFLIDMERFKYPERP). A helical membrane pass occupies residues 313–333 (IIFLSACYLFVSVGYLVRLVA). Residues 334–396 (GHEKVACSGG…RYETTGPALC (63 aa)) lie on the Extracellular side of the membrane. Residues 397 to 417 (TVVFLLVYFFGMASSIWWVIL) traverse the membrane as a helical segment. Topologically, residues 418 to 439 (SLTWFLAAGMKWGNEAIAGYSQ) are cytoplasmic. The chain crosses the membrane as a helical span at residues 440-460 (YFHLAAWLVPSVKSIAVLALS). The Extracellular portion of the chain corresponds to 461-483 (SVDGDPVAGICYVGNQSLDNLRG). N-linked (GlcNAc...) asparagine glycosylation occurs at Asn-475. Residues 484-504 (FVLAPLVIYLFIGTMFLLAGF) form a helical membrane-spanning segment. The Cytoplasmic portion of the chain corresponds to 505–532 (VSLFRIRSVIKQQDGPTKTHKLEKLMIR). The chain crosses the membrane as a helical span at residues 533-553 (LGLFTVLYTVPAAVVVACLFY). Residues 554–584 (EQHNRPRWEATHNCPCLRDLQPDQARRPDYA) lie on the Extracellular side of the membrane. A helical transmembrane segment spans residues 585–605 (VFMLKYFMCLVVGITSGVWVW). The Cytoplasmic portion of the chain corresponds to 606 to 694 (SGKTLESWRS…YPKQMPLSQV (89 aa)). The short motif at 608–613 (KTLESW) is the Lys-Thr-X-X-X-Trp motif, mediates interaction with the PDZ domain of Dvl family members element. The span at 648–664 (GGGGPGGGGGPGGGGGS) shows a compositional bias: gly residues. Residues 648 to 668 (GGGGPGGGGGPGGGGGSLYSD) form a disordered region. Residues 692-694 (SQV) carry the PDZ-binding motif.

The protein belongs to the G-protein coupled receptor Fz/Smo family. As to quaternary structure, component of a Wnt-signaling complex that contains a WNT protein, a FZD protein and LRP5 or LRP6. Interacts directly with LRP5 or LRP6; the interaction is promoted by Wnt-binding and signaling and inhibited by DKK1. Interacts with GPOC, RSPO1 and RSPO3. Interacts with glypican GPC3. Ubiquitinated by ZNRF3, leading to its degradation by the proteasome. Most abundant in fetal kidney, followed by brain and lung. In adult tissues, expressed in kidney, heart, pancreas and skeletal muscle.

Its subcellular location is the membrane. It localises to the golgi apparatus. The protein localises to the cell membrane. Functionally, receptor for Wnt proteins. Component of the Wnt-Fzd-LRP5-LRP6 complex that triggers beta-catenin signaling through inducing aggregation of receptor-ligand complexes into ribosome-sized signalosomes. The beta-catenin canonical signaling pathway leads to the activation of disheveled proteins, inhibition of GSK-3 kinase, nuclear accumulation of beta-catenin and activation of Wnt target genes. A second signaling pathway involving PKC and calcium fluxes has been seen for some family members, but it is not yet clear if it represents a distinct pathway or if it can be integrated in the canonical pathway, as PKC seems to be required for Wnt-mediated inactivation of GSK-3 kinase. Both pathways seem to involve interactions with G-proteins. May be involved in transduction and intercellular transmission of polarity information during tissue morphogenesis and/or in differentiated tissues. Coreceptor along with RYK of Wnt proteins, such as WNT1. The protein is Frizzled-8 (FZD8) of Homo sapiens (Human).